The sequence spans 312 residues: Carbonic anhydrase 4 (312 aa).

A signal peptide spans 1–18; the sequence is MRMLLALLALSAARPSAS. An Alpha-carbonic anhydrase domain is found at 21–285; it reads SHWCYEVQAE…LGQRTVIKSG (265 aa). Cystine bridges form between C24-C36 and C46-C229. H88 (proton donor/acceptor) is an active-site residue. Positions 115, 117, and 140 each coordinate Zn(2+). 225–226 is a substrate binding site; sequence TT. The GPI-anchor amidated serine moiety is linked to residue S284. Residues 285–312 constitute a propeptide, removed in mature form; that stretch reads GAPGRPLPWALPALLGPMLACLLAGFLR.

This sequence belongs to the alpha-carbonic anhydrase family. As to quaternary structure, interacts with SLC4A4. Zn(2+) is required as a cofactor. As to expression, expressed in the endothelium of the choriocapillaris in eyes (at protein level). Not expressed in the retinal epithelium at detectable levels.

It localises to the cell membrane. It carries out the reaction hydrogencarbonate + H(+) = CO2 + H2O. With respect to regulation, activated by histamine, L-adrenaline, D-phenylalanine, L- and D-histidine. Inhibited by coumarins, saccharin, sulfonamide derivatives such as acetazolamide and Foscarnet (phosphonoformate trisodium salt). Catalyzes the reversible hydration of carbon dioxide into bicarbonate and protons and thus is essential to maintaining intracellular and extracellular pH. May stimulate the sodium/bicarbonate transporter activity of SLC4A4 that acts in pH homeostasis. It is essential for acid overload removal from the retina and retina epithelium, and acid release in the choriocapillaris in the choroid. The protein is Carbonic anhydrase 4 of Homo sapiens (Human).